The chain runs to 185 residues: Pap fimbrial major pilin protein (185 aa).

The signal sequence occupies residues 1–22; it reads MIKSVIAGAVAMAVVSFGVNNA. A disulfide bridge connects residues cysteine 44 and cysteine 83.

It belongs to the fimbrial protein family.

Its subcellular location is the secreted. The protein resides in the fimbrium. Polymerizes to form the thick (6.8 nm in diameter) rod of the pilus (also called fimbria). The rod is a right-handed helical cylinder with 3.28 PapA subunits per turn. Pili are polar filaments radiating from the surface of the bacterium to a length of 0.5-1.5 micrometers and numbering 100-300 per cell, and enable bacteria to colonize the epithelium of specific host organs. The polypeptide is Pap fimbrial major pilin protein (papA) (Escherichia coli).